The sequence spans 129 residues: Glycine cleavage system H protein (129 aa).

A Lipoyl-binding domain is found at 24–106; that stretch reads TYTVGITEHA…YVGGWIFKIK (83 aa). Position 65 is an N6-lipoyllysine (Lys-65).

It belongs to the GcvH family. In terms of assembly, the glycine cleavage system is composed of four proteins: P, T, L and H. The cofactor is (R)-lipoate.

Functionally, the glycine cleavage system catalyzes the degradation of glycine. The H protein shuttles the methylamine group of glycine from the P protein to the T protein. In Salmonella paratyphi B (strain ATCC BAA-1250 / SPB7), this protein is Glycine cleavage system H protein.